Here is a 533-residue protein sequence, read N- to C-terminus: Malate synthase A (533 aa).

The active-site Proton acceptor is the Arg166. The active-site Proton donor is Asp447.

This sequence belongs to the malate synthase family.

It localises to the cytoplasm. It carries out the reaction glyoxylate + acetyl-CoA + H2O = (S)-malate + CoA + H(+). It participates in carbohydrate metabolism; glyoxylate cycle; (S)-malate from isocitrate: step 2/2. The chain is Malate synthase A (aceB) from Escherichia coli (strain K12).